A 60-amino-acid chain; its full sequence is uncharacterized protein (60 aa).

This is an uncharacterized protein from Escherichia coli (Bacteriophage T4).